Consider the following 291-residue polypeptide: Ajmaline N-methyltransferase (291 aa).

Residues 71–80 (MLDVGCGIGG) form an SAM motif I region. A Vacuolar targeting signal motif is present at residues 133 to 139 (DGAFDLV). The tract at residues 134-142 (GAFDLVLSI) is SAM motif II. The interval 161–170 (VAASGATIII) is SAM motif III.

The protein belongs to the class I-like SAM-binding methyltransferase superfamily. gTMT family. In terms of assembly, homodimer. As to expression, mainly expressed in roots, but barely detectable in stems and flowers.

It localises to the vacuole membrane. It catalyses the reaction ajmaline + S-adenosyl-L-methionine = 4-methylajmaline + S-adenosyl-L-homocysteine + H(+). The enzyme catalyses norajmaline + S-adenosyl-L-methionine = 4-methylnorajmaline + S-adenosyl-L-homocysteine + H(+). It functions in the pathway alkaloid biosynthesis; ajmaline biosynthesis. Its function is as follows. N-methyltransferase involved in the biosynthesis of ajmaline-type monoterpenoid indole alkaloids (MIAs) natural products, important plant-derived pharmaceuticals used in the therapy of heart disorders. Catalyzes the indole N-methylation of ajmaline to produce 4-methylajmaline. Also able, with a lower efficiency, to mediates the conversion of norajmaline to 4-methylnorajmaline. The protein is Ajmaline N-methyltransferase of Rauvolfia serpentina (Serpentine wood).